Here is a 644-residue protein sequence, read N- to C-terminus: Type III restriction-modification enzyme EcoP15I Mod subunit (644 aa).

A binding of S-adenosyl methionine region spans residues 123-126; that stretch reads DPPY.

The protein belongs to the N(4)/N(6)-methyltransferase family. In terms of assembly, forms a homodimer capable of methylating the target sequence in the absence of Res. A heterotetramer with stoichiometry Res(2)Mod(2). A heterotrimer with stoichiometry Res(1)Mod(2).

The enzyme catalyses a 2'-deoxyadenosine in DNA + S-adenosyl-L-methionine = an N(6)-methyl-2'-deoxyadenosine in DNA + S-adenosyl-L-homocysteine + H(+). Its function is as follows. A beta subtype methylase that binds the system-specific DNA recognition site 5'-CAGCAG-3' and methylates A-5 (of only 1 strand as the other does not have an A residue). DNA restriction requires both the Res and Mod subunits. The A-5 nucleotide flips into the catalytic pocket of one Mod subunit for modification, while the other Mod subunit makes most of the DNA sequence-specific contacts. This chain is Type III restriction-modification enzyme EcoP15I Mod subunit, found in Escherichia coli.